The sequence spans 169 residues: NAD(P)H-quinone oxidoreductase subunit J, chloroplastic (169 aa).

This sequence belongs to the complex I 30 kDa subunit family. In terms of assembly, NDH is composed of at least 16 different subunits, 5 of which are encoded in the nucleus.

The protein resides in the plastid. It localises to the chloroplast thylakoid membrane. It catalyses the reaction a plastoquinone + NADH + (n+1) H(+)(in) = a plastoquinol + NAD(+) + n H(+)(out). It carries out the reaction a plastoquinone + NADPH + (n+1) H(+)(in) = a plastoquinol + NADP(+) + n H(+)(out). NDH shuttles electrons from NAD(P)H:plastoquinone, via FMN and iron-sulfur (Fe-S) centers, to quinones in the photosynthetic chain and possibly in a chloroplast respiratory chain. The immediate electron acceptor for the enzyme in this species is believed to be plastoquinone. Couples the redox reaction to proton translocation, and thus conserves the redox energy in a proton gradient. The chain is NAD(P)H-quinone oxidoreductase subunit J, chloroplastic from Physcomitrium patens (Spreading-leaved earth moss).